A 765-amino-acid chain; its full sequence is MTTYLEFIQQNEERDGVRFSWNVWPSSRLEATRMVVPVAALFTPLKERPDSPPIQYEPVLCSRTTCRAVLNPLCQVDYRAKLWACNFCYQRNQFPPSYAGISELNQPAELLPQFSSIEYVVLRGPQMPLIFLYVVDTCMEDEDLQALKESMQMSLSLLPPTALVGLITFGRMVQVHELGCEGISKSYVFRGTKDLSAKQLQEMLGLSKVPVTQATRGPQVQQPPPSNRFLQPVQKIDMNLTDLLGELQRDPWPVPQGKRPLRSSGVALSIAVGLLECTFPNTGARIMMFIGGPATQGPGMVVGDELKTPIRSWHDIDKDNAKYVKKGTKHFEALANRAATTGHVIDIYACALDQTGLLEMKCCPNLTGGYMVMGDSFNTSLFKQTFQRVFTKDMHGQFKMGFGGTLEIKTSREIKISGAIGPCVSLNSKGPCVSENEIGTGGTCQWKICGLSPTTTLAIYFEVVNQHNAPIPQGGRGAIQFVTQYQHSSGQRRIRVTTIARNWADAQTQIQNIAASFDQEAAAILMARLAIYRAETEEGPDVLRWLDRQLIRLCQKFGEYHKDDPSSFRFSETFSLYPQFMFHLRRSSFLQVFNNSPDESSYYRHHFMRQDLTQSLIMIQPILYAYSFSGPPEPVLLDSSSILADRILLMDTFFQILIYHGETIAQWRKSGYQDMPEYENFRHLLQAPVDDAQEILHSRFPMPRYIDTEHGGSQARFLLSKVNPSQTHNNMYAWGQESGAPILTDDVSLQVFMDHLKKLAVSSAA.

At Thr-2 the chain carries N-acetylthreonine. Zn(2+) contacts are provided by Cys-61, Cys-66, Cys-85, and Cys-88. The residue at position 308 (Thr-308) is a Phosphothreonine. A Gelsolin-like repeat occupies 632–718 (PEPVLLDSSS…EHGGSQARFL (87 aa)).

This sequence belongs to the SEC23/SEC24 family. SEC23 subfamily. As to quaternary structure, COPII is composed of at least five proteins: the Sec23/24 complex, the Sec13/31 complex and Sar1. Interacts with SEC23IP. Interacts with HTR4. Interacts with SEC16A. Interacts with SLC6A4. Interacts (as part of the Sec23/24 complex) with SEC22B; recruits SEC22B into COPII-coated vesicles and allows the transport of this cargo from the endoplasmic reticulum to the Golgi. Interacts (via Gelsolin-like repeat) with MIA2 and MIA3; specifically involved in the transport of large cargos like the collagen COL7A1. Interacts with DDHD1. Interacts with TMEM39A. Interacts with SACM1L; this interaction is reduced in the absence of TMEM39A. Interacts with kinase FAM20C; transport of FAM20C from the endoplasmic reticulum to the Golgi is likely to be mediated by COPII vesicles.

Its subcellular location is the cytoplasmic vesicle. It is found in the COPII-coated vesicle membrane. The protein localises to the endoplasmic reticulum membrane. It localises to the cytoplasm. The protein resides in the cytosol. In terms of biological role, component of the coat protein complex II (COPII) which promotes the formation of transport vesicles from the endoplasmic reticulum (ER). The coat has two main functions, the physical deformation of the endoplasmic reticulum membrane into vesicles and the selection of cargo molecules for their transport to the Golgi complex. Required for the translocation of insulin-induced glucose transporter SLC2A4/GLUT4 to the cell membrane. This Pongo abelii (Sumatran orangutan) protein is Protein transport protein Sec23A.